We begin with the raw amino-acid sequence, 192 residues long: MELLGQKVKEDGVVIDERILKVDGFLNHQIDAKLMDEVGRTFYEQFKDKGITKILTIEASGIAPAIMAALHFDVPCLFAKKAKPSTLTDGYYETSIHSFTKNKTSTVIVSKEFLSEEDTVLIIDDFLANGDASLGLYDIAQQANAKTAGIGIVVEKSFQNGHQRLEEAGLTVSSLCKVASLEGNKVTLVGEE.

Xanthine contacts are provided by L20 and N27. Residue 128–132 participates in 5-phospho-alpha-D-ribose 1-diphosphate binding; that stretch reads ANGDA. Position 156 (K156) interacts with xanthine.

This sequence belongs to the purine/pyrimidine phosphoribosyltransferase family. Xpt subfamily. Homodimer.

Its subcellular location is the cytoplasm. It carries out the reaction XMP + diphosphate = xanthine + 5-phospho-alpha-D-ribose 1-diphosphate. It functions in the pathway purine metabolism; XMP biosynthesis via salvage pathway; XMP from xanthine: step 1/1. In terms of biological role, converts the preformed base xanthine, a product of nucleic acid breakdown, to xanthosine 5'-monophosphate (XMP), so it can be reused for RNA or DNA synthesis. The polypeptide is Xanthine phosphoribosyltransferase (Staphylococcus aureus (strain MRSA252)).